Consider the following 136-residue polypeptide: ATP synthase epsilon chain, chloroplastic (136 aa).

It belongs to the ATPase epsilon chain family. As to quaternary structure, F-type ATPases have 2 components, CF(1) - the catalytic core - and CF(0) - the membrane proton channel. CF(1) has five subunits: alpha(3), beta(3), gamma(1), delta(1), epsilon(1). CF(0) has three main subunits: a, b and c.

It localises to the plastid. Its subcellular location is the chloroplast thylakoid membrane. Its function is as follows. Produces ATP from ADP in the presence of a proton gradient across the membrane. The polypeptide is ATP synthase epsilon chain, chloroplastic (Tetradesmus obliquus (Green alga)).